The sequence spans 396 residues: Acetate kinase (396 aa).

Asn8 lines the Mg(2+) pocket. Position 15 (Lys15) interacts with ATP. Position 89 (Arg89) interacts with substrate. The active-site Proton donor/acceptor is the Asp146. Residues 206–210, 283–285, and 331–335 each bind ATP; these read HIGNG, DMR, and GVGEN. Glu383 lines the Mg(2+) pocket.

Belongs to the acetokinase family. As to quaternary structure, homodimer. It depends on Mg(2+) as a cofactor. Mn(2+) is required as a cofactor.

It localises to the cytoplasm. It carries out the reaction acetate + ATP = acetyl phosphate + ADP. Its pathway is metabolic intermediate biosynthesis; acetyl-CoA biosynthesis; acetyl-CoA from acetate: step 1/2. Its function is as follows. Catalyzes the formation of acetyl phosphate from acetate and ATP. Can also catalyze the reverse reaction. The protein is Acetate kinase of Streptococcus pneumoniae (strain JJA).